Here is a 248-residue protein sequence, read N- to C-terminus: Proteasome subunit alpha type-1 (248 aa).

This sequence belongs to the peptidase T1A family. As to quaternary structure, the 26S proteasome consists of a 20S proteasome core and two 19S regulatory subunits. The 20S proteasome core is composed of 28 subunits that are arranged in four stacked rings, resulting in a barrel-shaped structure. The two end rings are each formed by seven alpha subunits, and the two central rings are each formed by seven beta subunits. The catalytic chamber with the active sites is on the inside of the barrel.

It is found in the cytoplasm. Its subcellular location is the nucleus. Functionally, the proteasome is a multicatalytic proteinase complex which is characterized by its ability to cleave peptides with Arg, Phe, Tyr, Leu, and Glu adjacent to the leaving group at neutral or slightly basic pH. The proteasome has an ATP-dependent proteolytic activity. This is Proteasome subunit alpha type-1 (psmA1) from Dictyostelium discoideum (Social amoeba).